Reading from the N-terminus, the 98-residue chain is Large ribosomal subunit protein uL23 (98 aa).

It belongs to the universal ribosomal protein uL23 family. In terms of assembly, part of the 50S ribosomal subunit. Contacts protein L29, and trigger factor when it is bound to the ribosome.

One of the early assembly proteins it binds 23S rRNA. One of the proteins that surrounds the polypeptide exit tunnel on the outside of the ribosome. Forms the main docking site for trigger factor binding to the ribosome. This chain is Large ribosomal subunit protein uL23, found in Saccharophagus degradans (strain 2-40 / ATCC 43961 / DSM 17024).